The chain runs to 102 residues: MSSPPEGKLETKAGHPPAVKAGGMRIVQKHPHSGDTREEKDKDDQEWESPSPPKPTVFISGVIARGDKDFPPAAAQVAHQKPHASIDRHPSPRTQHIQQPRK.

The tract at residues 1–102 (MSSPPEGKLE…RTQHIQQPRK (102 aa)) is disordered. Ser2 bears the N-acetylserine mark. Residue Ser3 is modified to Phosphoserine; by MTOR. Lys29 is subject to N6-acetyllysine. The segment covering 32–43 (HSGDTREEKDKD) has biased composition (basic and acidic residues). Phosphoserine is present on Ser49. Phosphoserine; by MTOR is present on Ser51. Ser91 carries the post-translational modification Phosphoserine. Polar residues predominate over residues 92–102 (PRTQHIQQPRK).

It belongs to the DAP-DAPL1 family. Associates with ribosomes; inhibiting translation. Interacts with eiF5a (EIF5A and EIF5A2); inhibiting translation. In terms of processing, phosphorylated. Phosphorylation by MTOR inhibits the suppressive activity of DAP toward autophagy.

Functionally, ribosome-binding protein involved in ribosome hibernation, a process during which ribosomes are stabilized in an inactive state and preserved from proteasomal degradation. Acts via its association with eiF5a (EIF5A and EIF5A2) at the polypeptide exit tunnel of the ribosome, preventing mRNA translation. Involved in ribosome hibernation in the mature oocyte by preventing mRNA translation, leading to ribosome inactivation. Ribosomes, which are produced in large quantities during oogenesis, are stored and translationally repressed in the oocyte and early embryo. Also acts as a negative regulator of autophagy. Involved in mediating interferon-gamma-induced cell death. This is Death-associated protein 1 (DAP) from Bos taurus (Bovine).